Here is a 484-residue protein sequence, read N- to C-terminus: Regulator of G-protein signaling 9 (484 aa).

In terms of domain architecture, DEP spans 30–105; sequence PDTGVRVQNQ…PDSSLYRFQT (76 aa). One can recognise a G protein gamma domain in the interval 219–280; that stretch reads VVSVRKEIMY…ITDDTQFWDL (62 aa). In terms of domain architecture, RGS spans 299–414; sequence NFSELIRDPK…LKSPIYKEML (116 aa). Residues 460 to 484 are disordered; sequence TTVDITQVMSKLDRRSQLRKEPPPK. Positions 470 to 484 are enriched in basic and acidic residues; the sequence is KLDRRSQLRKEPPPK.

In terms of assembly, heterodimer with GNB5. Interacts with RGS7BP, leading to regulate the subcellular location of the heterodimer formed with GNB5. Component of the RGS9-1-Gbeta5 complex composed of RGS9 (RGS9-1), Gbeta5 (GNB5) and RGS9BP. Interacts with PDE6G and GNAT1. Phosphorylation is decreased by light exposition. Photoreceptor outer segments.

Its subcellular location is the membrane. In terms of biological role, inhibits signal transduction by increasing the GTPase activity of G protein alpha subunits thereby driving them into their inactive GDP-bound form. Binds to GNAT1. Involved in phototransduction; key element in the recovery phase of visual transduction. This chain is Regulator of G-protein signaling 9 (RGS9), found in Bos taurus (Bovine).